Here is a 385-residue protein sequence, read N- to C-terminus: Putative hydroxypyruvate reductase (385 aa).

It carries out the reaction (R)-glycerate + NAD(+) = 3-hydroxypyruvate + NADH + H(+). It catalyses the reaction (R)-glycerate + NADP(+) = 3-hydroxypyruvate + NADPH + H(+). The protein operates within carbohydrate acid metabolism; tartrate degradation; 3-hydroxypyruvate from D-glycerate: step 1/1. Functionally, degrades an unidentified toxic product from the first step of tartrate degradation. The polypeptide is Putative hydroxypyruvate reductase (ttuD) (Agrobacterium vitis (Rhizobium vitis)).